A 213-amino-acid polypeptide reads, in one-letter code: MSGRERNGGRSAENNDKKERNERNGRNDRGGRNDRRNQQDERSQFIERVVTINRVSKVVKGGRRFSFTALVIVGDGQGMVGVGYGKAKEVPAAIQKGAEEARKNFFRVPMINGTITHPVQGEDAAGIVMMKPAAPGTGVIAGGAVRPVLECAGVQDILSKSLGSDNAINIVHATVAGLKQLVRPEEVAARRGKSLDEVAPAAMLRARAAGQGA.

The interval 1 to 41 (MSGRERNGGRSAENNDKKERNERNGRNDRGGRNDRRNQQDE) is disordered. Residues 45-108 (FIERVVTINR…EEARKNFFRV (64 aa)) enclose the S5 DRBM domain.

This sequence belongs to the universal ribosomal protein uS5 family. In terms of assembly, part of the 30S ribosomal subunit. Contacts proteins S4 and S8.

In terms of biological role, with S4 and S12 plays an important role in translational accuracy. Its function is as follows. Located at the back of the 30S subunit body where it stabilizes the conformation of the head with respect to the body. In Corynebacterium jeikeium (strain K411), this protein is Small ribosomal subunit protein uS5.